The chain runs to 255 residues: Adenosylcobinamide-GDP ribazoletransferase (255 aa).

Helical transmembrane passes span 24–44 (LIAYVPLVALFDAALAASLYV), 45–65 (AIYGISKLLASFISVSAIYIV), 98–118 (VGAGGVFTLIFVYLLALISLS), 122–142 (LYIGIFSIILAEFLSKSMMMI), 164–184 (KHDSLYTVEFVVIPIVLALLS), and 187–207 (SIMISVALAFLIFIIVKMAVI).

It belongs to the CobS family. Requires Mg(2+) as cofactor.

Its subcellular location is the cell membrane. It catalyses the reaction alpha-ribazole + adenosylcob(III)inamide-GDP = adenosylcob(III)alamin + GMP + H(+). The enzyme catalyses alpha-ribazole 5'-phosphate + adenosylcob(III)inamide-GDP = adenosylcob(III)alamin 5'-phosphate + GMP + H(+). Its pathway is cofactor biosynthesis; adenosylcobalamin biosynthesis; adenosylcobalamin from cob(II)yrinate a,c-diamide: step 7/7. Joins adenosylcobinamide-GDP and alpha-ribazole to generate adenosylcobalamin (Ado-cobalamin). Also synthesizes adenosylcobalamin 5'-phosphate from adenosylcobinamide-GDP and alpha-ribazole 5'-phosphate. This Thermoplasma acidophilum (strain ATCC 25905 / DSM 1728 / JCM 9062 / NBRC 15155 / AMRC-C165) protein is Adenosylcobinamide-GDP ribazoletransferase.